The sequence spans 195 residues: MRLCDTDIERYLDDGIISLTPRPNNDKINGATIDVRLGNSFRVFREHSAPFIDLSGPKEEVSAQLESVMSDEILIPEGEAFFLHPGTLALATTLESVKLPANIIGWLDGRSSLARLGLMVHVTAHRIDPGWEGKIVLEFYNSGKLPLALRPNMVIGALSFEVLSGEAKRPYSSRKDAKYKNQQSAVASRIDEDKE.

DCTP is bound by residues 110–115 (RSSLAR), aspartate 128, 136–138 (VLE), tyrosine 171, lysine 178, and glutamine 182. Residue glutamate 138 is the Proton donor/acceptor of the active site. The segment covering 169 to 179 (RPYSSRKDAKY) has biased composition (basic and acidic residues). Residues 169-195 (RPYSSRKDAKYKNQQSAVASRIDEDKE) are disordered.

The protein belongs to the dCTP deaminase family. In terms of assembly, homotrimer.

It carries out the reaction dCTP + H2O + H(+) = dUTP + NH4(+). It functions in the pathway pyrimidine metabolism; dUMP biosynthesis; dUMP from dCTP (dUTP route): step 1/2. Functionally, catalyzes the deamination of dCTP to dUTP. This chain is dCTP deaminase, found in Haemophilus influenzae (strain 86-028NP).